Reading from the N-terminus, the 219-residue chain is dTTP/UTP pyrophosphatase (219 aa).

Asp-79 (proton acceptor) is an active-site residue.

This sequence belongs to the Maf family. YhdE subfamily. A divalent metal cation is required as a cofactor.

It is found in the cytoplasm. It catalyses the reaction dTTP + H2O = dTMP + diphosphate + H(+). It carries out the reaction UTP + H2O = UMP + diphosphate + H(+). Functionally, nucleoside triphosphate pyrophosphatase that hydrolyzes dTTP and UTP. May have a dual role in cell division arrest and in preventing the incorporation of modified nucleotides into cellular nucleic acids. The protein is dTTP/UTP pyrophosphatase of Oleidesulfovibrio alaskensis (strain ATCC BAA-1058 / DSM 17464 / G20) (Desulfovibrio alaskensis).